A 210-amino-acid chain; its full sequence is Primase-associated factor LEF-2 (210 aa).

The protein belongs to the baculoviridae LEF-2 family. Interacts with the DNA primase.

It is found in the virion. Its subcellular location is the host nucleus. It localises to the host cytoplasm. Its function is as follows. Plays an essential role in viral DNA replication. Does not seem to participate in the initiation step but is rather important for the amplification of DNA. Also required for expression from the vp39 and polh promoters. The polypeptide is Primase-associated factor LEF-2 (LEF-2) (Autographa californica nuclear polyhedrosis virus (AcMNPV)).